Consider the following 443-residue polypeptide: ATP-dependent protease ATPase subunit HslU (443 aa).

Residues I19, G61–E66, D256, E321, and R393 each bind ATP.

The protein belongs to the ClpX chaperone family. HslU subfamily. As to quaternary structure, a double ring-shaped homohexamer of HslV is capped on each side by a ring-shaped HslU homohexamer. The assembly of the HslU/HslV complex is dependent on binding of ATP.

Its subcellular location is the cytoplasm. Its function is as follows. ATPase subunit of a proteasome-like degradation complex; this subunit has chaperone activity. The binding of ATP and its subsequent hydrolysis by HslU are essential for unfolding of protein substrates subsequently hydrolyzed by HslV. HslU recognizes the N-terminal part of its protein substrates and unfolds these before they are guided to HslV for hydrolysis. This chain is ATP-dependent protease ATPase subunit HslU, found in Ralstonia pickettii (strain 12J).